We begin with the raw amino-acid sequence, 274 residues long: Large ribosomal subunit protein uL2cz/uL2cy (274 aa).

Residues 1 to 15 (MAINLYKTSTPSTRN) are compositionally biased toward polar residues. 2 disordered regions span residues 1–22 (MAIN…DSQV) and 225–274 (PVDH…RRSK).

The protein belongs to the universal ribosomal protein uL2 family. As to quaternary structure, part of the 50S ribosomal subunit.

It localises to the plastid. Its subcellular location is the chloroplast. This is Large ribosomal subunit protein uL2cz/uL2cy (rpl2-A) from Lobularia maritima (Sweet alyssum).